Reading from the N-terminus, the 345-residue chain is Sulfate/thiosulfate import ATP-binding protein CysA (345 aa).

In terms of domain architecture, ABC transporter spans 3–237 (IQVSGLCKHF…PRTEFVYQFV (235 aa)). ATP is bound at residue 35-42 (GPSGCGKT).

The protein belongs to the ABC transporter superfamily. Sulfate/tungstate importer (TC 3.A.1.6) family. In terms of assembly, the complex is composed of two ATP-binding proteins (CysA), two transmembrane proteins (CysT and CysW) and a solute-binding protein (CysP).

Its subcellular location is the cell inner membrane. The catalysed reaction is sulfate(out) + ATP + H2O = sulfate(in) + ADP + phosphate + H(+). The enzyme catalyses thiosulfate(out) + ATP + H2O = thiosulfate(in) + ADP + phosphate + H(+). In terms of biological role, part of the ABC transporter complex CysAWTP involved in sulfate/thiosulfate import. Responsible for energy coupling to the transport system. This Vibrio vulnificus (strain CMCP6) protein is Sulfate/thiosulfate import ATP-binding protein CysA.